Reading from the N-terminus, the 100-residue chain is Urease subunit gamma (100 aa).

Belongs to the urease gamma subunit family. As to quaternary structure, heterotrimer of UreA (gamma), UreB (beta) and UreC (alpha) subunits. Three heterotrimers associate to form the active enzyme.

It localises to the cytoplasm. It carries out the reaction urea + 2 H2O + H(+) = hydrogencarbonate + 2 NH4(+). It participates in nitrogen metabolism; urea degradation; CO(2) and NH(3) from urea (urease route): step 1/1. The protein is Urease subunit gamma of Burkholderia orbicola (strain MC0-3).